The primary structure comprises 388 residues: Cell adhesion molecule 4 (388 aa).

The first 20 residues, 1 to 20, serve as a signal peptide directing secretion; that stretch reads MGRARRFQWPLLLLWAAAAG. The 99-residue stretch at 21–119 folds into the Ig-like V-type domain; it reads PGAGQEVQTE…DTHHQIATLT (99 aa). Residues 21-324 lie on the Extracellular side of the membrane; sequence PGAGQEVQTE…VEAQTSVPYA (304 aa). Asn-31 and Asn-67 each carry an N-linked (GlcNAc...) asparagine glycan. Intrachain disulfides connect Cys-44/Cys-104, Cys-145/Cys-199, and Cys-245/Cys-291. Ig-like C2-type domains lie at 124 to 219 and 224 to 307; these read PENP…YVLD and PTAR…YVLV. An N-linked (GlcNAc...) asparagine glycan is attached at Asn-286. Residues 325-345 traverse the membrane as a helical segment; the sequence is IVGGILALLVFLIICVLVGMV. Over 346-388 the chain is Cytoplasmic; the sequence is WCSVRQKGSYLTHEASGLDEQGEAREAFLNGSDGHKRKEEFFI. Position 361 is a phosphoserine (Ser-361).

Belongs to the nectin family. Monomer and homodimer. Post-translationally, N-glycosylated. Expressed in brain, prostate, brain, kidney and some other organs.

Its subcellular location is the membrane. In terms of biological role, involved in the cell-cell adhesion. Has calcium- and magnesium-independent cell-cell adhesion activity. May have tumor-suppressor activity. This chain is Cell adhesion molecule 4 (CADM4), found in Homo sapiens (Human).